The sequence spans 626 residues: PEX5-related protein (626 aa).

Disordered stretches follow at residues 1 to 20, 118 to 167, and 181 to 235; these read MYQGHMQKSKEQGYGKLSSD, VSQT…SSLD, and KFHG…ASEL. The span at 181 to 198 shows a compositional bias: basic and acidic residues; it reads KFHGDRNTKGHPMAERKS. Phosphoserine is present on S205. Positions 225–235 are enriched in low complexity; that stretch reads SALNSESASEL. 3 positions are modified to phosphoserine: S253, S257, and S261. 3 TPR repeats span residues 326-359, 360-393, and 395-427; these read WPGAFEEGLKRLKEGDLPVTILFMEAAILQDPGD, AEAWQFLGITQAENENEQAAIVALQRCLELQPNN, and KALMALAVSYTNTGHQQDACDALKNWIKQNPKY. S445 and S447 each carry phosphoserine. TPR repeat units follow at residues 474-507, 509-541, and 543-575; these read PDLQTGLGVLFHLSGEFNRAIDAFNAALTVRPED, SLWNRLGATLANGDRSEEAVEAYTRALEIQPGF, and RSRYNLGISCINLGAYREAVSNFLTALSLQRKS.

Belongs to the peroxisomal targeting signal receptor family. In terms of assembly, interacts with RAB8B. Forms an obligate 4:4 complex with HCN2. May interact with the C-terminal PTS1-type tripeptide peroxisomal targeting signal (SKL-type); the relevance of such interaction is however unclear. Interacts with HCN3. Interacts with HCN4 with a 4:4 HCN4:PEX5L stoichiometry; reduces the effects of cAMP on the voltage-dependence and rate of activation of HCN4. In terms of tissue distribution, mainly expressed in brain. Also expressed in pancreas, testis and pituitary.

It localises to the cytoplasm. It is found in the membrane. Accessory subunit of hyperpolarization-activated cyclic nucleotide-gated (HCN) channels, regulating their cell-surface expression and cyclic nucleotide dependence. The sequence is that of PEX5-related protein (PEX5L) from Homo sapiens (Human).